A 365-amino-acid chain; its full sequence is UDP-N-acetylglucosamine--N-acetylmuramyl-(pentapeptide) pyrophosphoryl-undecaprenol N-acetylglucosamine transferase (365 aa).

UDP-N-acetyl-alpha-D-glucosamine-binding positions include 17-19 (TGG), asparagine 129, arginine 167, serine 194, isoleucine 250, 269-274 (ALTVSE), and glutamine 295.

It belongs to the glycosyltransferase 28 family. MurG subfamily.

The protein resides in the cell inner membrane. It carries out the reaction di-trans,octa-cis-undecaprenyl diphospho-N-acetyl-alpha-D-muramoyl-L-alanyl-D-glutamyl-meso-2,6-diaminopimeloyl-D-alanyl-D-alanine + UDP-N-acetyl-alpha-D-glucosamine = di-trans,octa-cis-undecaprenyl diphospho-[N-acetyl-alpha-D-glucosaminyl-(1-&gt;4)]-N-acetyl-alpha-D-muramoyl-L-alanyl-D-glutamyl-meso-2,6-diaminopimeloyl-D-alanyl-D-alanine + UDP + H(+). It participates in cell wall biogenesis; peptidoglycan biosynthesis. In terms of biological role, cell wall formation. Catalyzes the transfer of a GlcNAc subunit on undecaprenyl-pyrophosphoryl-MurNAc-pentapeptide (lipid intermediate I) to form undecaprenyl-pyrophosphoryl-MurNAc-(pentapeptide)GlcNAc (lipid intermediate II). This is UDP-N-acetylglucosamine--N-acetylmuramyl-(pentapeptide) pyrophosphoryl-undecaprenol N-acetylglucosamine transferase from Shewanella halifaxensis (strain HAW-EB4).